Here is a 100-residue protein sequence, read N- to C-terminus: Small ribosomal subunit protein bS20 (100 aa).

The protein belongs to the bacterial ribosomal protein bS20 family.

In terms of biological role, binds directly to 16S ribosomal RNA. The sequence is that of Small ribosomal subunit protein bS20 from Prochlorococcus marinus (strain MIT 9211).